The primary structure comprises 60 residues: Large ribosomal subunit protein bL32 (60 aa).

It belongs to the bacterial ribosomal protein bL32 family.

This Pediococcus pentosaceus (strain ATCC 25745 / CCUG 21536 / LMG 10740 / 183-1w) protein is Large ribosomal subunit protein bL32.